The chain runs to 204 residues: Venom allergen 5 (204 aa).

Cystine bridges form between Cys4/Cys17, Cys8/Cys101, Cys26/Cys94, and Cys170/Cys187. Residues 45–189 enclose the SCP domain; it reads LKEHNDFRQK…WHKHYLVCNY (145 aa).

It belongs to the CRISP family. Venom allergen 5-like subfamily. In terms of tissue distribution, expressed by the venom gland.

The protein resides in the secreted. The chain is Venom allergen 5 from Vespula pensylvanica (Western yellow jacket).